The chain runs to 410 residues: Chloride intracellular channel protein 5 (410 aa).

The short motif at 191–194 (CPFS) is the G-site element. The helical transmembrane segment at 193–213 (FSQRLFMILWLKGVVFNVTTV) threads the bilayer. The GST C-terminal domain maps to 260–400 (YPKLAAKHRE…AADSEIELAY (141 aa)).

It belongs to the chloride channel CLIC family. In terms of assembly, component of a multimeric complex consisting of several cytoskeletal proteins, including actin, ezrin, alpha-actinin, gelsolin, and IQGAP1. Interacts with AKAP9. Interacts with TPRN. TPRN, CLIC5 and PTPQR form concentric rings at the base of stereocilia and may form a complex. Interacts with EZR, MYO6 and RDX; the proteins may work together as a complex to stabilize linkages between the plasma membrane and subjacent actin cytoskeleton at the stereocilium base. In terms of tissue distribution, widely expressed in both fetal and adult human tissues. Isoform 1 is expressed in renal glomeruli endothelial cells and podocytes (at protein level).

It is found in the cytoplasm. The protein resides in the cytoskeleton. It localises to the cell cortex. The protein localises to the membrane. Its subcellular location is the apical cell membrane. It is found in the mitochondrion. The protein resides in the cell projection. It localises to the stereocilium. The protein localises to the golgi apparatus. Its subcellular location is the microtubule organizing center. It is found in the centrosome. The enzyme catalyses chloride(in) = chloride(out). It carries out the reaction Na(+)(in) = Na(+)(out). The catalysed reaction is K(+)(in) = K(+)(out). Its activity is regulated as follows. Inhibited by F-actin. Functionally, in the soluble state, catalyzes glutaredoxin-like thiol disulfide exchange reactions with reduced glutathione as electron donor. Can insert into membranes and form non-selective ion channels almost equally permeable to Na(+), K(+) and Cl(-). Required for normal hearing. It is necessary for the formation of stereocilia in the inner ear and normal development of the organ of Corti. May play a role in the regulation of transepithelial ion absorption and secretion. Is required for the development and/or maintenance of the proper glomerular endothelial cell and podocyte architecture. Plays a role in formation of the lens suture in the eye, which is important for normal optical properties of the lens. This is Chloride intracellular channel protein 5 from Homo sapiens (Human).